Consider the following 419-residue polypeptide: MTTQLEQAWELAKQRFAAVGIDVEEALRQLDRLPVSMHCWQGDDVSGFENPEGSLTGGIQATGNYPGKARNASELRADLEQAMRLIPGPKRLNLHAIYLESDTPVSRDQIKPEHFKNWVEWAKANQLGLDFNPSCFSHPLSADGFTLSHADDSIRQFWIDHCKASRRVSAYFGEQLGTPSVMNIWIPDGMKDITVDRLAPRQRLLAALDEVISEKLNPAHHIDAVESKLFGIGAESYTVGSNEFYMGYATSRQTALCLDAGHFHPTEVISDKISAAMLYVPQLLLHVSRPVRWDSDHVVLLDDETQAIASEIVRHDLFDRVHIGLDFFDASINRIAAWVIGTRNMKKALLRALLEPTAELRKLEAAGDYTARLALLEEQKSLPWQAVWEMYCQRHDTPAGSEWLESVRAYEKEILSRRG.

Positions 262, 294, and 296 each coordinate Mn(2+).

The protein belongs to the rhamnose isomerase family. Homotetramer. Mn(2+) is required as a cofactor.

The protein localises to the cytoplasm. The catalysed reaction is L-rhamnopyranose = L-rhamnulose. It functions in the pathway carbohydrate degradation; L-rhamnose degradation; glycerone phosphate from L-rhamnose: step 1/3. Functionally, catalyzes the interconversion of L-rhamnose and L-rhamnulose. The chain is L-rhamnose isomerase from Escherichia coli (strain K12 / MC4100 / BW2952).